The following is a 283-amino-acid chain: Nucleotide-binding protein THEYE_A0235 (283 aa).

An ATP-binding site is contributed by 12 to 19 (GLSGGGKT). 62 to 65 (DIRV) provides a ligand contact to GTP.

The protein belongs to the RapZ-like family.

In terms of biological role, displays ATPase and GTPase activities. The polypeptide is Nucleotide-binding protein THEYE_A0235 (Thermodesulfovibrio yellowstonii (strain ATCC 51303 / DSM 11347 / YP87)).